The sequence spans 124 residues: Galanin peptides (124 aa).

The N-terminal stretch at 1 to 19 (MARGSVILLGWLLLVVTLS) is a signal peptide. A propeptide spanning residues 20–30 (ATLGLGMPAKE) is cleaved from the precursor. A Threonine amide modification is found at Thr61. Ser117 and Ser118 each carry phosphoserine.

Belongs to the galanin family. In terms of tissue distribution, expressed in retinal progenitor cells and retinal ganglion cells (at protein level).

Its subcellular location is the secreted. Endocrine hormone of the central and peripheral nervous systems that binds and activates the G protein-coupled receptors GALR1, GALR2, and GALR3. This small neuropeptide may regulate diverse physiologic functions including contraction of smooth muscle of the gastrointestinal and genitourinary tract, growth hormone and insulin release and adrenal secretion. This is Galanin peptides (Gal) from Mus musculus (Mouse).